Consider the following 72-residue polypeptide: Cell division protein ZapB (72 aa).

Residues 1 to 71 (MSLEILDQLE…LRSLLGRIDN (71 aa)) adopt a coiled-coil conformation. Positions 36–56 (LSRQTNEQLRSENEHLKTEHH) are disordered. The span at 44 to 56 (LRSENEHLKTEHH) shows a compositional bias: basic and acidic residues.

This sequence belongs to the ZapB family. In terms of assembly, homodimer. The ends of the coiled-coil dimer bind to each other, forming polymers. Interacts with FtsZ.

Its subcellular location is the cytoplasm. Its function is as follows. Non-essential, abundant cell division factor that is required for proper Z-ring formation. It is recruited early to the divisome by direct interaction with FtsZ, stimulating Z-ring assembly and thereby promoting cell division earlier in the cell cycle. Its recruitment to the Z-ring requires functional FtsA or ZipA. The polypeptide is Cell division protein ZapB (Histophilus somni (strain 129Pt) (Haemophilus somnus)).